We begin with the raw amino-acid sequence, 292 residues long: Bifunctional protein FolD (292 aa).

NADP(+) is bound by residues 166–168, S191, and I232; that span reads GRS.

It belongs to the tetrahydrofolate dehydrogenase/cyclohydrolase family. In terms of assembly, homodimer.

The enzyme catalyses (6R)-5,10-methylene-5,6,7,8-tetrahydrofolate + NADP(+) = (6R)-5,10-methenyltetrahydrofolate + NADPH. The catalysed reaction is (6R)-5,10-methenyltetrahydrofolate + H2O = (6R)-10-formyltetrahydrofolate + H(+). The protein operates within one-carbon metabolism; tetrahydrofolate interconversion. Functionally, catalyzes the oxidation of 5,10-methylenetetrahydrofolate to 5,10-methenyltetrahydrofolate and then the hydrolysis of 5,10-methenyltetrahydrofolate to 10-formyltetrahydrofolate. In Synechococcus sp. (strain RCC307), this protein is Bifunctional protein FolD.